The primary structure comprises 162 residues: NADH-quinone oxidoreductase subunit I (162 aa).

4Fe-4S ferredoxin-type domains lie at Leu53–Glu83 and Thr93–Asn122. Residues Cys63, Cys66, Cys69, Cys73, Cys102, Cys105, Cys108, and Cys112 each coordinate [4Fe-4S] cluster.

Belongs to the complex I 23 kDa subunit family. As to quaternary structure, NDH-1 is composed of 14 different subunits. Subunits NuoA, H, J, K, L, M, N constitute the membrane sector of the complex. [4Fe-4S] cluster is required as a cofactor.

It localises to the cell inner membrane. The enzyme catalyses a quinone + NADH + 5 H(+)(in) = a quinol + NAD(+) + 4 H(+)(out). NDH-1 shuttles electrons from NADH, via FMN and iron-sulfur (Fe-S) centers, to quinones in the respiratory chain. The immediate electron acceptor for the enzyme in this species is believed to be ubiquinone. Couples the redox reaction to proton translocation (for every two electrons transferred, four hydrogen ions are translocated across the cytoplasmic membrane), and thus conserves the redox energy in a proton gradient. This chain is NADH-quinone oxidoreductase subunit I, found in Sphingopyxis alaskensis (strain DSM 13593 / LMG 18877 / RB2256) (Sphingomonas alaskensis).